Consider the following 145-residue polypeptide: Large ribosomal subunit protein uL16 (145 aa).

The protein belongs to the universal ribosomal protein uL16 family. Part of the 50S ribosomal subunit.

Binds 23S rRNA and is also seen to make contacts with the A and possibly P site tRNAs. The protein is Large ribosomal subunit protein uL16 of Shouchella clausii (strain KSM-K16) (Alkalihalobacillus clausii).